We begin with the raw amino-acid sequence, 250 residues long: NAD(P)H-quinone oxidoreductase subunit K, chloroplastic (250 aa).

Cys-61, Cys-62, Cys-126, and Cys-157 together coordinate [4Fe-4S] cluster.

It belongs to the complex I 20 kDa subunit family. In terms of assembly, NDH is composed of at least 16 different subunits, 5 of which are encoded in the nucleus. [4Fe-4S] cluster is required as a cofactor.

Its subcellular location is the plastid. It is found in the chloroplast thylakoid membrane. The catalysed reaction is a plastoquinone + NADH + (n+1) H(+)(in) = a plastoquinol + NAD(+) + n H(+)(out). It catalyses the reaction a plastoquinone + NADPH + (n+1) H(+)(in) = a plastoquinol + NADP(+) + n H(+)(out). In terms of biological role, NDH shuttles electrons from NAD(P)H:plastoquinone, via FMN and iron-sulfur (Fe-S) centers, to quinones in the photosynthetic chain and possibly in a chloroplast respiratory chain. The immediate electron acceptor for the enzyme in this species is believed to be plastoquinone. Couples the redox reaction to proton translocation, and thus conserves the redox energy in a proton gradient. In Angiopteris evecta (Mule's foot fern), this protein is NAD(P)H-quinone oxidoreductase subunit K, chloroplastic.